The chain runs to 59 residues: Early growth response protein 1 (59 aa).

3 C2H2-type zinc fingers span residues 1 to 18 (CDRR…IRIH), 24 to 46 (FQCR…IRTH), and 52 to 59 (FACDICGR).

The protein belongs to the EGR C2H2-type zinc-finger protein family.

It is found in the nucleus. It localises to the cytoplasm. Functionally, transcriptional regulator. Recognizes and binds to the DNA sequence 5'-GCG(T/G)GGGCG-3'(EGR-site) in the promoter region of target genes. Binds double-stranded target DNA, irrespective of the cytosine methylation status. Regulates the transcription of numerous target genes, and thereby plays an important role in regulating the response to growth factors, DNA damage, and ischemia. Plays a role in the regulation of cell survival, proliferation and cell death. Mediates responses to ischemia and hypoxia; regulates the expression of proteins that are involved in inflammatory processes. Plays a role in regulating the expression of circadian clock genes. This is Early growth response protein 1 (EGR1) from Serinus canaria (Island canary).